A 297-amino-acid polypeptide reads, in one-letter code: Nucleotide-binding protein CJA_2809 (297 aa).

Position 8–15 (8–15 (GLSGSGKT)) interacts with ATP. A GTP-binding site is contributed by 59 to 62 (DVRN).

Belongs to the RapZ-like family.

Functionally, displays ATPase and GTPase activities. The chain is Nucleotide-binding protein CJA_2809 from Cellvibrio japonicus (strain Ueda107) (Pseudomonas fluorescens subsp. cellulosa).